A 223-amino-acid polypeptide reads, in one-letter code: Putative 3-methyladenine DNA glycosylase (223 aa).

This sequence belongs to the DNA glycosylase MPG family.

This is Putative 3-methyladenine DNA glycosylase from Pseudomonas savastanoi pv. phaseolicola (strain 1448A / Race 6) (Pseudomonas syringae pv. phaseolicola (strain 1448A / Race 6)).